Here is a 60-residue protein sequence, read N- to C-terminus: Hemocyte defensin Cg-Defh2 (60 aa).

The first 17 residues, 1–17 (LLTLAVLLMVSADMAFA), serve as a signal peptide directing secretion. 3 residues coordinate beta-D-GlcNAc-(1-&gt;4)-Mur2Ac(oyl-L-Ala-gamma-D-Glu-L-Lys-D-Ala-D-Ala)-di-trans,octa-cis-undecaprenyl diphosphate: phenylalanine 19, glycine 20, and cysteine 21. Intrachain disulfides connect cysteine 21–cysteine 42, cysteine 28–cysteine 51, cysteine 32–cysteine 53, and cysteine 37–cysteine 56. Positions 22–25 (PGDQ) are binds to membrane interface. Residue histidine 31 participates in beta-D-GlcNAc-(1-&gt;4)-Mur2Ac(oyl-L-Ala-gamma-D-Glu-L-Lys-D-Ala-D-Ala)-di-trans,octa-cis-undecaprenyl diphosphate binding. Residues 43–49 (DAVTLWL) form a binds to membrane interface region. Beta-D-GlcNAc-(1-&gt;4)-Mur2Ac(oyl-L-Ala-gamma-D-Glu-L-Lys-D-Ala-D-Ala)-di-trans,octa-cis-undecaprenyl diphosphate is bound at residue cysteine 51.

This sequence belongs to the invertebrate defensin family. As to expression, expressed in hemocytes.

It localises to the secreted. It is found in the target cell membrane. Functionally, antibacterial peptide mostly active against Gram-positive bacteria. It acts by selectively inhibiting peptidoglycan biosynthesis through complex formation with the cell wall precursor lipid II (1:1 molar ratio) thus inhibiting cell wall synthesis. It does not disrupt cell membranes. Is noticeably more potent than Cg-Defh1. This Magallana gigas (Pacific oyster) protein is Hemocyte defensin Cg-Defh2.